The chain runs to 161 residues: Transcriptional repressor NrdR (161 aa).

Residues 1 to 11 show a composition bias toward basic residues; the sequence is MQCPHCQHHNS. The disordered stretch occupies residues 1–21; it reads MQCPHCQHHNSRVLESRSSEG. The segment at 3–34 is a zinc-finger region; the sequence is CPHCQHHNSRVLESRSSEGGQSIRRRRECLEC. In terms of domain architecture, ATP-cone spans 49-139; sequence VTVIKQDGER…VYGRFQGIAD (91 aa).

This sequence belongs to the NrdR family. Zn(2+) serves as cofactor.

Functionally, negatively regulates transcription of bacterial ribonucleotide reductase nrd genes and operons by binding to NrdR-boxes. The protein is Transcriptional repressor NrdR of Synechocystis sp. (strain ATCC 27184 / PCC 6803 / Kazusa).